A 130-amino-acid polypeptide reads, in one-letter code: B1 protein (130 aa).

A signal peptide spans 1–12 (LTSLILLVAVQA). Intrachain disulfides connect Cys-28–Cys-59 and Cys-99–Cys-116.

The protein belongs to the PBP/GOBP family. In terms of processing, N-glycosylated. Tubular accessory sex gland.

It localises to the secreted. Functionally, may be a carrier protein for lipids. The polypeptide is B1 protein (Tenebrio molitor (Yellow mealworm beetle)).